Reading from the N-terminus, the 138-residue chain is Large-conductance mechanosensitive channel (138 aa).

A run of 2 helical transmembrane segments spans residues 10–30 and 76–96; these read FAMR…AAFG and GSFI…FLAI.

The protein belongs to the MscL family. In terms of assembly, homopentamer.

It is found in the cell inner membrane. In terms of biological role, channel that opens in response to stretch forces in the membrane lipid bilayer. May participate in the regulation of osmotic pressure changes within the cell. This is Large-conductance mechanosensitive channel from Serratia proteamaculans (strain 568).